A 464-amino-acid chain; its full sequence is 3-isopropylmalate dehydratase large subunit (464 aa).

[4Fe-4S] cluster is bound by residues C337, C397, and C400.

Belongs to the aconitase/IPM isomerase family. LeuC type 1 subfamily. Heterodimer of LeuC and LeuD. [4Fe-4S] cluster serves as cofactor.

The enzyme catalyses (2R,3S)-3-isopropylmalate = (2S)-2-isopropylmalate. It participates in amino-acid biosynthesis; L-leucine biosynthesis; L-leucine from 3-methyl-2-oxobutanoate: step 2/4. Functionally, catalyzes the isomerization between 2-isopropylmalate and 3-isopropylmalate, via the formation of 2-isopropylmaleate. The protein is 3-isopropylmalate dehydratase large subunit of Bacillus cereus (strain G9842).